We begin with the raw amino-acid sequence, 381 residues long: Diguanylate cyclase DosC (381 aa).

His-98 contributes to the heme binding site. In terms of domain architecture, GGDEF spans 325-381; sequence TPLSVLIIDVDKFKEINDTWGHNTGDEILRKVSFLSQKRLVKSKILGAGSSRKLAVS. Position 333 (Asp-333) interacts with Mg(2+). Positions 341 and 350 each coordinate substrate.

Requires heme as cofactor. The cofactor is Mg(2+).

The catalysed reaction is 2 GTP = 3',3'-c-di-GMP + 2 diphosphate. Its pathway is purine metabolism; 3',5'-cyclic di-GMP biosynthesis. Functionally, globin-coupled heme-based oxygen sensor protein displaying diguanylate cyclase (DGC) activity in response to oxygen availability. Thus, catalyzes the synthesis of cyclic diguanylate (c-di-GMP) via the condensation of 2 GTP molecules. Cyclic-di-GMP is a second messenger which controls cell surface-associated traits in bacteria. In Shigella flexneri serotype 5b (strain 8401), this protein is Diguanylate cyclase DosC (dosC).